The chain runs to 652 residues: Zinc finger protein 432 (652 aa).

The KRAB domain maps to 8 to 79; that stretch reads LTLEDVTVEF…EDERHSRICP (72 aa). A 3'-nitrotyrosine modification is found at Tyr41. Residues Ser139 and Ser164 each carry the ADP-ribosylserine modification. C2H2-type zinc fingers lie at residues 205 to 227, 233 to 255, 261 to 283, 289 to 311, 317 to 339, 345 to 367, 373 to 395, 401 to 423, 429 to 451, 457 to 479, 485 to 507, 513 to 535, 541 to 563, 567 to 591, 597 to 619, and 625 to 647; these read HVCSECGKAFVKKSQLTDHERVH, YGCTLCAKVFSRKSRLNEHQRIH, FICSECGKVFTMKSRLIEHQRTH, YICNECGKGFPGKRNLIVHQRNH, YICSECGKGFTGKSMLIIHQRTH, YICSECGKGFTTKHYVIIHQRNH, YICNECGKGFTMKSRMIEHQRTH, YICSECGKGFPRKSNLIVHQRNH, YLCSECGKGFTVKSMLIIHQRTH, YTCSECGKGFPLKSRLIVHQRTH, YRCSECGKGFIVNSGLMLHQRTH, YICNECGKGFAFKSNLVVHQRTH, FMCSECGKGFTMKRYLIVHQQIH, KSCICSECGRGFAKETELALHKQVH, YGCNECGKGFTMKSRLIVHQRTH, and FVCSECRKAFSSKRNLIVHQRTH. The residue at position 246 (Ser246) is an ADP-ribosylserine. At Ser330 the chain carries ADP-ribosylserine. At Ser414 the chain carries ADP-ribosylserine.

This sequence belongs to the krueppel C2H2-type zinc-finger protein family. As to quaternary structure, interacts with PARP1 and several chromatin remodeling proteins; the interaction with PARP1 reshapes ZNF432 interacting proteins. Interacts with TRIM28; the interaction is independent of PARP1.

It localises to the nucleus. In terms of biological role, homologous recombination repressor that functions as a poly(ADP-ribose) (PAR) reader regulating DNA damage response and PARP inhibition. Once recruited to DNA lesions via DNA-, in a PAR-dependent mechanism, stimulates PARP1 activity. Binds preferentially ssDNA and inhibits EXO1-mediated resection, probably through a PAR-independent DNA-binding mechanism. This chain is Zinc finger protein 432, found in Homo sapiens (Human).